We begin with the raw amino-acid sequence, 466 residues long: Chromosomal replication initiator protein DnaA (466 aa).

The segment at 1 to 86 (MSLSLWQQCL…EVGTKPVTQT (86 aa)) is domain I, interacts with DnaA modulators. Residues 86 to 129 (TLKTPVHNVVAPAQTTTAQPQRVAPAARSGWDNVPAPAEPTYRS) form a domain II region. Residues 130–346 (NVNVKHTFDN…GALNRVIANA (217 aa)) form a domain III, AAA+ region region. ATP-binding residues include Gly-174, Gly-176, Lys-177, and Thr-178. A domain IV, binds dsDNA region spans residues 347-466 (NFTGRAITID…FSNLIRTLSS (120 aa)).

Belongs to the DnaA family. Oligomerizes as a right-handed, spiral filament on DNA at oriC.

Its subcellular location is the cytoplasm. Its function is as follows. Plays an essential role in the initiation and regulation of chromosomal replication. ATP-DnaA binds to the origin of replication (oriC) to initiate formation of the DNA replication initiation complex once per cell cycle. Binds the DnaA box (a 9 base pair repeat at the origin) and separates the double-stranded (ds)DNA. Forms a right-handed helical filament on oriC DNA; dsDNA binds to the exterior of the filament while single-stranded (ss)DNA is stabiized in the filament's interior. The ATP-DnaA-oriC complex binds and stabilizes one strand of the AT-rich DNA unwinding element (DUE), permitting loading of DNA polymerase. After initiation quickly degrades to an ADP-DnaA complex that is not apt for DNA replication. Binds acidic phospholipids. This Salmonella agona (strain SL483) protein is Chromosomal replication initiator protein DnaA.